The following is a 292-amino-acid chain: Ribosomal protein L11 methyltransferase (292 aa).

Threonine 143, glycine 164, aspartate 186, and asparagine 228 together coordinate S-adenosyl-L-methionine.

Belongs to the methyltransferase superfamily. PrmA family.

Its subcellular location is the cytoplasm. The enzyme catalyses L-lysyl-[protein] + 3 S-adenosyl-L-methionine = N(6),N(6),N(6)-trimethyl-L-lysyl-[protein] + 3 S-adenosyl-L-homocysteine + 3 H(+). Its function is as follows. Methylates ribosomal protein L11. The sequence is that of Ribosomal protein L11 methyltransferase from Tolumonas auensis (strain DSM 9187 / NBRC 110442 / TA 4).